A 619-amino-acid chain; its full sequence is MSKSKCSVGPMSSVVAPAKESNAVGPREVELILVKEQNGVQLTNSTLINPPQTPVEAQERETWSKKIDFLLSVIGFAVDLANVWRFPYLCYKNGGGAFLVPYLLFMVIAGMPLFYMELALGQFNREGAAGVWKICPVLKGVGFTVILISFYVGFFYNVIIAWALHYFFSSFTMDLPWIHCNNTWNSPNCSDAHASNSSDGLGLNDTFGTTPAAEYFERGVLHLHQSRGIDDLGPPRWQLTACLVLVIVLLYFSLWKGVKTSGKVVWITATMPYVVLTALLLRGVTLPGAMDGIRAYLSVDFYRLCEASVWIDAATQVCFSLGVGFGVLIAFSSYNKFTNNCYRDAIITTSINSLTSFSSGFVVFSFLGYMAQKHNVPIRDVATDGPGLIFIIYPEAIATLPLSSAWAAVFFLMLLTLGIDSAMGGMESVITGLVDEFQLLHRHRELFTLGIVLATFLLSLFCVTNGGIYVFTLLDHFAAGTSILFGVLIEAIGVAWFYGVQQFSDDIKQMTGQRPNLYWRLCWKLVSPCFLLYVVVVSIVTFRPPHYGAYIFPDWANALGWIIATSSMAMVPIYATYKFCSLPGSFREKLAYAITPEKDHQLVDRGEVRQFTLRHWLLL.

Over 1–56 the chain is Cytoplasmic; it reads MSKSKCSVGPMSSVVAPAKESNAVGPREVELILVKEQNGVQLTNSTLINPPQTPVE. The discontinuously helical transmembrane segment at 57–95 threads the bilayer; the sequence is AQERETWSKKIDFLLSVIGFAVDLANVWRFPYLCYKNGG. Positions 75, 77, 78, 79, and 82 each coordinate Na(+). Asp-79 lines the dopamine pocket. Transmembrane regions (helical) follow at residues 96 to 127 and 128 to 171; these read GAFL…NREG and AAGV…FSSF. The dopamine site is built by Ser-149 and Gly-153. The Extracellular portion of the chain corresponds to 172 to 235; sequence TMDLPWIHCN…SRGIDDLGPP (64 aa). A disulfide bridge links Cys-180 with Cys-189. N-linked (GlcNAc...) asparagine glycans are attached at residues Asn-181, Asn-188, Asn-196, and Asn-204. The next 2 membrane-spanning stretches (helical) occupy residues 236–255 and 256–286; these read RWQL…FSLW and KGVK…GVTL. The Extracellular portion of the chain corresponds to 287 to 305; it reads PGAMDGIRAYLSVDFYRLC. Residues 306–334 form a discontinuously helical membrane-spanning segment; the sequence is EASVWIDAATQVCFSLGVGFGVLIAFSSY. Residue Gln-316 coordinates chloride. Position 319 (Phe-319) interacts with dopamine. The Na(+) site is built by Ser-320 and Asn-352. Chloride is bound at residue Ser-320. The helical transmembrane segment at 335–375 threads the bilayer; that stretch reads NKFTNNCYRDAIITTSINSLTSFSSGFVVFSFLGYMAQKHN. Ser-356 is a binding site for chloride. Residues 376-399 lie on the Extracellular side of the membrane; it reads VPIRDVATDGPGLIFIIYPEAIAT. 3 helical membrane passes run 400–441, 442–465, and 466–498; these read LPLS…QLLH, RHRE…CVTN, and GGIY…AWFY. Residues Leu-417, Asp-420, and Ser-421 each coordinate Na(+). Ser-421 and Ala-422 together coordinate dopamine. The Cytoplasmic portion of the chain corresponds to 499–515; it reads GVQQFSDDIKQMTGQRP. Residues 516-541 form a helical membrane-spanning segment; sequence NLYWRLCWKLVSPCFLLYVVVVSIVT. Over 542-552 the chain is Extracellular; it reads FRPPHYGAYIF. Residues 553-582 traverse the membrane as a helical segment; the sequence is PDWANALGWIIATSSMAMVPIYATYKFCSL. The segment at 560 to 589 is interaction with TGFB1I1; the sequence is GWIIATSSMAMVPIYATYKFCSLPGSFREK. The Cytoplasmic portion of the chain corresponds to 583-619; sequence PGSFREKLAYAITPEKDHQLVDRGEVRQFTLRHWLLL.

Belongs to the sodium:neurotransmitter symporter (SNF) (TC 2.A.22) family. SLC6A3 subfamily. As to quaternary structure, monomer. Homooligomer; disulfide-linked. Interacts with PRKCABP and TGFB1I1. Interacts (via N-terminus) with SYNGR3 (via N-terminus). Interacts with SLC18A2. Interacts with TOR1A (ATP-bound); TOR1A regulates SLC6A3 subcellular location. Interacts with alpha-synuclein/SNCA. Interacts with SEPTIN4. As to expression, brain. Expressed in the substantia nigra and ventral tegmental area, regions that contain dopaminergic cell bodies.

The protein resides in the cell membrane. The protein localises to the cell projection. Its subcellular location is the neuron projection. It is found in the axon. The enzyme catalyses dopamine(out) + chloride(out) + Na(+)(out) = dopamine(in) + chloride(in) + Na(+)(in). It carries out the reaction (R)-noradrenaline(out) + chloride(out) + Na(+)(out) = (R)-noradrenaline(in) + chloride(in) + Na(+)(in). The catalysed reaction is dopamine(out) + chloride(out) + 2 Na(+)(out) = dopamine(in) + chloride(in) + 2 Na(+)(in). With respect to regulation, inhibited by mazindol, cocaine, desipramine, GBR 12783 dihydrochloride, GBR 12909 dihydrochloride and nomifensine. Inhibited by zinc ions. In terms of biological role, mediates sodium- and chloride-dependent transport of dopamine. Also mediates sodium- and chloride-dependent transport of norepinephrine (also known as noradrenaline). Regulator of light-dependent retinal hyaloid vessel regression, downstream of OPN5 signaling. In Rattus norvegicus (Rat), this protein is Sodium-dependent dopamine transporter (Slc6a3).